Reading from the N-terminus, the 185-residue chain is Segregation and condensation protein B (185 aa).

The protein belongs to the ScpB family. As to quaternary structure, homodimer. Homodimerization may be required to stabilize the binding of ScpA to the Smc head domains. Component of a cohesin-like complex composed of ScpA, ScpB and the Smc homodimer, in which ScpA and ScpB bind to the head domain of Smc. The presence of the three proteins is required for the association of the complex with DNA.

Its subcellular location is the cytoplasm. Participates in chromosomal partition during cell division. May act via the formation of a condensin-like complex containing Smc and ScpA that pull DNA away from mid-cell into both cell halves. This is Segregation and condensation protein B from Alkaliphilus oremlandii (strain OhILAs) (Clostridium oremlandii (strain OhILAs)).